The following is a 430-amino-acid chain: RNA polymerase-associated protein LEO1 (430 aa).

Positions 1–10 are enriched in polar residues; the sequence is MSSSEGNSDA. The disordered stretch occupies residues 1–128; it reads MSSSEGNSDA…SRGSLNDLQG (128 aa). Low complexity predominate over residues 18–30; it reads KSSTPSSRGSSPD. Residues 99-119 are compositionally biased toward basic and acidic residues; it reads REGKPKESNTRARLSDSDAES. Coiled coils occupy residues 326-347 and 409-429; these read TRRENARKEEESLRAHIRRTQM and EEYRKRKQQQKKQIVTSDEES. Residues 349-430 are disordered; that stretch reads RNNFKVRGPR…QIVTSDEESD (82 aa).

The protein belongs to the LEO1 family. In terms of assembly, component of the PAF1 complex which consists of at least cdc-73, ctr-9, leo-1, pafo-1 and rtfo-1.

The protein localises to the nucleus. Its subcellular location is the cytoplasm. In terms of biological role, component of the PAF1 complex which is a multifunctional complex involved in transcription initiation via genetic interactions with TATA-binding proteins, elongation and transcription-coupled histone modification. The sequence is that of RNA polymerase-associated protein LEO1 from Caenorhabditis elegans.